A 213-amino-acid polypeptide reads, in one-letter code: Putative 3-methyladenine DNA glycosylase (213 aa).

It belongs to the DNA glycosylase MPG family.

The chain is Putative 3-methyladenine DNA glycosylase from Paraburkholderia phytofirmans (strain DSM 17436 / LMG 22146 / PsJN) (Burkholderia phytofirmans).